A 95-amino-acid polypeptide reads, in one-letter code: Nucleoid-associated protein MARTH_orf159 (95 aa).

Belongs to the YbaB/EbfC family. Homodimer.

It localises to the cytoplasm. Its subcellular location is the nucleoid. Its function is as follows. Binds to DNA and alters its conformation. May be involved in regulation of gene expression, nucleoid organization and DNA protection. The chain is Nucleoid-associated protein MARTH_orf159 from Metamycoplasma arthritidis (strain 158L3-1) (Mycoplasma arthritidis).